The primary structure comprises 500 residues: Na(+)/H(+) antiporter NhaB (500 aa).

A run of 12 helical transmembrane segments spans residues 34 to 54 (PLFF…EFIF), 62 to 82 (CYPL…GMTT), 90 to 110 (LVHN…IYFM), 129 to 149 (ALLG…LDAL), 150 to 170 (TVTA…HRVA), 205 to 225 (LLMH…VGEP), 241 to 261 (FFSK…VTCV), 311 to 331 (ILIV…LLVI), 350 to 370 (FKDA…VAVI), 394 to 414 (MLFI…VATI), 449 to 469 (VATP…IAPL), and 477 to 497 (MVWM…YAVS).

It belongs to the NhaB Na(+)/H(+) (TC 2.A.34) antiporter family.

It localises to the cell inner membrane. It carries out the reaction 2 Na(+)(in) + 3 H(+)(out) = 2 Na(+)(out) + 3 H(+)(in). Functionally, na(+)/H(+) antiporter that extrudes sodium in exchange for external protons. The protein is Na(+)/H(+) antiporter NhaB of Pseudomonas fluorescens (strain ATCC BAA-477 / NRRL B-23932 / Pf-5).